A 483-amino-acid chain; its full sequence is Sodium/pantothenate symporter (483 aa).

The Periplasmic segment spans residues 1–2; the sequence is MQ. The chain crosses the membrane as a helical span at residues 3-23; sequence LEVILPLVAYLVVVFGISVYA. Residues 24 to 42 lie on the Cytoplasmic side of the membrane; the sequence is MRKRSTGTFLNEYFLGSRS. A helical membrane pass occupies residues 43 to 63; that stretch reads MGGIVLAMTLTATYISASSFI. Residues 64 to 73 are Periplasmic-facing; the sequence is GGPGAAYKYG. The chain crosses the membrane as a helical span at residues 74–94; that stretch reads LGWVLLAMIQLPAVWLSLGIL. Residues 95–123 are Cytoplasmic-facing; it reads GKKFAILARRYNAVTLNDMLFARYQSRLL. The helical transmembrane segment at 124–144 threads the bilayer; that stretch reads VWLASLSLLVAFVGAMTVQFI. Topologically, residues 145–157 are periplasmic; sequence GGARLLETAAGIP. The helical transmembrane segment at 158 to 178 threads the bilayer; sequence YETGLLIFGISIALYTAFGGF. Over 179–189 the chain is Cytoplasmic; it reads RASVLNDTMQG. Residues 190–210 traverse the membrane as a helical segment; it reads LVMLIGTVVLLIGVVHAAGGL. The Periplasmic portion of the chain corresponds to 211 to 232; sequence SNAVQTLQTIDPQLVTPQGADD. A helical transmembrane segment spans residues 233–253; the sequence is ILSPAFMTSFWVLVCFGVIGL. The Cytoplasmic portion of the chain corresponds to 254–272; it reads PHTAVRCISYKDSKAVHRG. The helical transmembrane segment at 273–293 threads the bilayer; it reads IIIGTIVVAILMFGMHLAGAL. Over 294-305 the chain is Periplasmic; sequence GRAVIPDLTVPD. A helical membrane pass occupies residues 306–326; sequence LVIPTLMVKVLPPFAAGIFLA. The Cytoplasmic segment spans residues 327 to 368; it reads APMAAIMSTINAQLLQSSATIIKDLYLNIRPDQMQNETRLKR. A helical membrane pass occupies residues 369–389; that stretch reads MSAVITLVLGALLLLAAWKPP. Residues 390 to 391 lie on the Periplasmic side of the membrane; that stretch reads EM. A helical membrane pass occupies residues 392-412; it reads IIWLNLLAFGGLEAVFLWPLV. Over 413 to 423 the chain is Cytoplasmic; the sequence is LGLYWERANAK. A helical transmembrane segment spans residues 424–444; it reads GALSAMIVGGVLYAVLATLNI. Q445 is a topological domain (periplasmic). Residues 446–466 traverse the membrane as a helical segment; it reads YLGFHPIVPSLLLSLLAFLVG. The Cytoplasmic segment spans residues 467–483; sequence NRFGTSVPQATVLTTDK.

The protein belongs to the sodium:solute symporter (SSF) (TC 2.A.21) family.

It localises to the cell inner membrane. It carries out the reaction (R)-pantothenate(in) + Na(+)(in) = (R)-pantothenate(out) + Na(+)(out). With respect to regulation, pantothenate uptake is not reduced in osmotically shocked cells or by ATP depletion with arsenate, but is reduced greater than 90% by the dissipation of the membrane electrochemical gradient with 2,4-dinitrophenol. Catalyzes the sodium-dependent uptake of extracellular pantothenate. In Escherichia coli (strain K12), this protein is Sodium/pantothenate symporter.